A 250-amino-acid polypeptide reads, in one-letter code: ATP synthase subunit a (250 aa).

The next 5 helical transmembrane spans lie at 27-47 (TDTV…AFYL), 83-103 (IAPF…ISNW), 129-149 (INYV…AGIW), 191-211 (IFAG…IMWA), and 219-239 (FDLF…ILYF).

Belongs to the ATPase A chain family. In terms of assembly, F-type ATPases have 2 components, CF(1) - the catalytic core - and CF(0) - the membrane proton channel. CF(1) has five subunits: alpha(3), beta(3), gamma(1), delta(1), epsilon(1). CF(0) has three main subunits: a(1), b(2) and c(9-12). The alpha and beta chains form an alternating ring which encloses part of the gamma chain. CF(1) is attached to CF(0) by a central stalk formed by the gamma and epsilon chains, while a peripheral stalk is formed by the delta and b chains.

The protein resides in the cell membrane. Key component of the proton channel; it plays a direct role in the translocation of protons across the membrane. In Mycobacterium marinum (strain ATCC BAA-535 / M), this protein is ATP synthase subunit a.